The primary structure comprises 618 residues: Mitochondrial Rho GTPase 2 (618 aa).

The Cytoplasmic portion of the chain corresponds to 1–591 (MKRDVRILLL…LNAVELGAAS (591 aa)). The region spanning 2–168 (KRDVRILLLG…FYYAQKAVLH (167 aa)) is the Miro 1 domain. GTP-binding residues include Gly-16, Lys-17, Thr-18, and Ser-19. Residue Thr-18 coordinates Mg(2+). Pro-35 and Asp-57 together coordinate Mg(2+). GTP contacts are provided by Ser-59, Asn-118, Lys-119, Asp-121, Ala-149, and Lys-150. 2 consecutive EF-hand domains span residues 184 to 219 (ACSRALTRIFNLSDQDNNQILSDDELNYFQKSCFGN) and 304 to 339 (LGYQFLQRLFEKHDKDQDGALSPAELQNFFSVFPCM). Positions 197, 199, 201, 208, 317, 319, 321, and 328 each coordinate Ca(2+). In terms of domain architecture, Miro 2 spans 416-579 (RNVFLCKVLG…YTKLATAATF (164 aa)). 5 residues coordinate GTP: Gly-428, Gly-430, Lys-431, Ser-432, and Ala-433. Mg(2+) is bound at residue Ser-432. Glu-474 serves as a coordination point for Mg(2+). GTP is bound by residues Lys-528, Asp-530, and Cys-559. Residues 592–614 (FWLRVALGAAVTALVGFTLYRVL) traverse the membrane as a helical; Anchor for type IV membrane protein segment. Topologically, residues 615–618 (AKNK) are mitochondrial intermembrane.

Belongs to the mitochondrial Rho GTPase family. As to quaternary structure, homodimer.

Its subcellular location is the mitochondrion outer membrane. The enzyme catalyses GTP + H2O = GDP + phosphate + H(+). It catalyses the reaction ATP + H2O = ADP + phosphate + H(+). It carries out the reaction UTP + H2O = UDP + phosphate + H(+). Atypical mitochondrial nucleoside-triphosphatase (NTPase) involved in mitochondrial trafficking. Probably involved in control of anterograde transport of mitochondria and their subcellular distribution. Can hydrolyze GTP, ATP and UTP. The chain is Mitochondrial Rho GTPase 2 (RHOT2) from Gallus gallus (Chicken).